The primary structure comprises 203 residues: MIGRLRGIIIEKQPPLVLIEVGGVGYEVHMPMTCFYELPEAGQEAIVFTHFVVREDAQLLYGFNNKQERTLFKELIKTNGVGPKLALAILSGMSAQQFVNAVEREEVGPLVKLPGIGKKTAERLIVEMKDRFKGLHGDLFTPAADLVLTSPASPATDDAEQEAVAALVALGYKPQEASRMVSKIARPDTSSETLIREALRAAL.

The segment at 1 to 64 is domain I; it reads MIGRLRGIII…EDAQLLYGFN (64 aa). Residues 65-142 form a domain II region; sequence NKQERTLFKE…KGLHGDLFTP (78 aa). Residues 143 to 154 are flexible linker; the sequence is AADLVLTSPASP. Residues 155-203 form a domain III region; it reads ATDDAEQEAVAALVALGYKPQEASRMVSKIARPDTSSETLIREALRAAL.

The protein belongs to the RuvA family. In terms of assembly, homotetramer. Forms an RuvA(8)-RuvB(12)-Holliday junction (HJ) complex. HJ DNA is sandwiched between 2 RuvA tetramers; dsDNA enters through RuvA and exits via RuvB. An RuvB hexamer assembles on each DNA strand where it exits the tetramer. Each RuvB hexamer is contacted by two RuvA subunits (via domain III) on 2 adjacent RuvB subunits; this complex drives branch migration. In the full resolvosome a probable DNA-RuvA(4)-RuvB(12)-RuvC(2) complex forms which resolves the HJ.

Its subcellular location is the cytoplasm. The RuvA-RuvB-RuvC complex processes Holliday junction (HJ) DNA during genetic recombination and DNA repair, while the RuvA-RuvB complex plays an important role in the rescue of blocked DNA replication forks via replication fork reversal (RFR). RuvA specifically binds to HJ cruciform DNA, conferring on it an open structure. The RuvB hexamer acts as an ATP-dependent pump, pulling dsDNA into and through the RuvAB complex. HJ branch migration allows RuvC to scan DNA until it finds its consensus sequence, where it cleaves and resolves the cruciform DNA. The sequence is that of Holliday junction branch migration complex subunit RuvA from Shigella flexneri serotype 5b (strain 8401).